The sequence spans 301 residues: Amine sulfotransferase (301 aa).

46-51 (KSGTVW) contributes to the 3'-phosphoadenylyl sulfate binding site. His101 functions as the Proton acceptor in the catalytic mechanism. 3'-phosphoadenylyl sulfate is bound by residues Arg123, Ser131, Tyr186, 220-225 (ATFENM), and 252-254 (RKG).

This sequence belongs to the sulfotransferase 1 family. In terms of tissue distribution, expressed in male liver.

Its subcellular location is the cytoplasm. The catalysed reaction is a primary amine + 3'-phosphoadenylyl sulfate = a sulfamate + adenosine 3',5'-bisphosphate + 2 H(+). In terms of biological role, sulfotransferase that utilizes 3'-phospho-5'-adenylyl sulfate (PAPS) as sulfonate donor to catalyze the N-sulfonation of amines (PTHP, aniline, 4-chloroaniline, 2-naphthylamine). This is Amine sulfotransferase (SULT3A1) from Oryctolagus cuniculus (Rabbit).